Here is a 364-residue protein sequence, read N- to C-terminus: Palmitoyltransferase ZDHHC9 (364 aa).

The Cytoplasmic segment spans residues 1–35 (MSVMVVRKKVTRKWEKLPGRNTFCCDGRVMMARQK). A helical membrane pass occupies residues 36–56 (GIFYLTLFLILGTCTLFFAFE). Over 57-63 (CRYLAVQ) the chain is Lumenal. A helical membrane pass occupies residues 64-84 (QSPAIPVFAAMLFLFSMATLL). Topologically, residues 85-183 (RASFSDPGVI…NCVGKRNYRY (99 aa)) are cytoplasmic. Residues 139 to 189 (KYCYTCKIFRPPRASHCSICDNCVERFDHHCPWVGNCVGKRNYRYFYLFIL) form the DHHC domain. The S-palmitoyl cysteine intermediate role is filled by C169. Residues 184 to 204 (FYLFILSLSLLTIYVFAFNIV) traverse the membrane as a helical segment. At 205 to 228 (YVALKSLKIGFLETLKETPGTVLE) the chain is on the lumenal side. A helical transmembrane segment spans residues 229 to 249 (VLICFFTLWSVVGLTGFHTFL). Over 250–364 (VALNQTTNED…PPQEAAEAEK (115 aa)) the chain is Cytoplasmic. Residues 303–364 (PLEESGSRPP…PPQEAAEAEK (62 aa)) are disordered. Polar residues predominate over residues 310 to 323 (RPPSTQETSSSLLP). Residues 346–356 (EMPPPEPPEPP) are compositionally biased toward pro residues.

It belongs to the DHHC palmitoyltransferase family. ERF2/ZDHHC9 subfamily. As to quaternary structure, interacts with GOLGA7.

The protein localises to the endoplasmic reticulum membrane. It is found in the golgi apparatus membrane. The enzyme catalyses L-cysteinyl-[protein] + hexadecanoyl-CoA = S-hexadecanoyl-L-cysteinyl-[protein] + CoA. In terms of biological role, palmitoyltransferase that catalyzes the addition of palmitate onto various protein substrates, such as ADRB2, GSDMD, HRAS, NRAS and CGAS. The ZDHHC9-GOLGA7 complex is a palmitoyltransferase specific for HRAS and NRAS. May have a palmitoyltransferase activity toward the beta-2 adrenergic receptor/ADRB2 and therefore regulate G protein-coupled receptor signaling. Acts as a regulator of innate immunity by catalyzing palmitoylation of CGAS, thereby promoting CGAS homodimerization and cyclic GMP-AMP synthase activity. Activates pyroptosis by catalyzing palmitoylation of gasdermin-D (GSDMD), thereby promoting membrane translocation and pore formation of GSDMD. The protein is Palmitoyltransferase ZDHHC9 (ZDHHC9) of Pongo abelii (Sumatran orangutan).